The following is a 215-amino-acid chain: 3,4-dihydroxy-2-butanone 4-phosphate synthase (215 aa).

D-ribulose 5-phosphate contacts are provided by residues 38 to 39 (RE), D43, 151 to 155 (RRGHT), and E175. E39 is a binding site for Mg(2+). H154 contributes to the Mg(2+) binding site.

It belongs to the DHBP synthase family. Homodimer. The cofactor is Mg(2+). Requires Mn(2+) as cofactor.

It carries out the reaction D-ribulose 5-phosphate = (2S)-2-hydroxy-3-oxobutyl phosphate + formate + H(+). It functions in the pathway cofactor biosynthesis; riboflavin biosynthesis; 2-hydroxy-3-oxobutyl phosphate from D-ribulose 5-phosphate: step 1/1. In terms of biological role, catalyzes the conversion of D-ribulose 5-phosphate to formate and 3,4-dihydroxy-2-butanone 4-phosphate. This chain is 3,4-dihydroxy-2-butanone 4-phosphate synthase, found in Haemophilus influenzae (strain ATCC 51907 / DSM 11121 / KW20 / Rd).